A 102-amino-acid polypeptide reads, in one-letter code: Small ribosomal subunit protein uS14 (102 aa).

The protein belongs to the universal ribosomal protein uS14 family. In terms of assembly, part of the 30S ribosomal subunit. Contacts proteins S3 and S10.

Its function is as follows. Binds 16S rRNA, required for the assembly of 30S particles and may also be responsible for determining the conformation of the 16S rRNA at the A site. The chain is Small ribosomal subunit protein uS14 from Wolbachia pipientis wMel.